Reading from the N-terminus, the 447-residue chain is MDEEYDVIVLGTGLTECILSGIMSVNGKKVLHMDRNPYYGGESSSITPLEELYKRFQLLEGPPEAMGRGRDWNVDLIPKFLMANGQLVKMLLYTEVTRYLDFKVVEGSFIYKGGKIYKVPSTETEALASNLMGMFEKRRFRKFLVFVANFDENDPKTFEGVDPQSTSMRDVYRKFDLGQDVIDFTGHALALYRTDDYLDQPCLETINRIKLYSESLARYGKSPYLYPLYGLGELPQGFARLSAIYGGTYMLNKPVDDIIMENGKVVGVKSEGEVARCKQLICDPSYIPDRVRKAGQVIRIICILSHPIKNTNDANSCQIIIPQNQVNRKSDIYVCMISYAHNVAAQGKYIAIASTTVETAEPEKEVEPALELLEPIDQKFVAISDLYEPIDDGSESQVFCSCSYDATTHFETTCNDIKDIYKRMAGSAFDFENMKRKQNDVFGEADQ.

Position 427 is a phosphoserine (serine 427).

It belongs to the Rab GDI family. In terms of assembly, interacts with RHOH. Interacts with the non-phosphorylated forms of RAB1A, RAB3A, RAB5A, RAB5B, RAB5C, RAB8A, RAB8B, RAB10, RAB12, RAB35, and RAB43.

Its subcellular location is the cytoplasm. The protein localises to the golgi apparatus. The protein resides in the trans-Golgi network. Its function is as follows. Regulates the GDP/GTP exchange reaction of most Rab proteins by inhibiting the dissociation of GDP from them, and the subsequent binding of GTP to them. Promotes the dissociation of GDP-bound Rab proteins from the membrane and inhibits their activation. Promotes the dissociation of RAB1A, RAB3A, RAB5A and RAB10 from membranes. In Canis lupus familiaris (Dog), this protein is Rab GDP dissociation inhibitor alpha (GDI1).